Here is a 743-residue protein sequence, read N- to C-terminus: Phosphoribosylformylglycinamidine synthase subunit PurL (743 aa).

His50 is a catalytic residue. Residues Tyr53 and Lys92 each contribute to the ATP site. Glu94 provides a ligand contact to Mg(2+). Substrate-binding positions include 95–98 and Arg117; that span reads SHNH. His96 functions as the Proton acceptor in the catalytic mechanism. Asp118 is a binding site for Mg(2+). Gln241 contacts substrate. Mg(2+) is bound at residue Asp269. 313-315 contributes to the substrate binding site; sequence ESQ. Positions 495 and 532 each coordinate ATP. A Mg(2+)-binding site is contributed by Asn533. Residue Ser535 coordinates substrate.

The protein belongs to the FGAMS family. As to quaternary structure, monomer. Part of the FGAM synthase complex composed of 1 PurL, 1 PurQ and 2 PurS subunits.

It is found in the cytoplasm. It carries out the reaction N(2)-formyl-N(1)-(5-phospho-beta-D-ribosyl)glycinamide + L-glutamine + ATP + H2O = 2-formamido-N(1)-(5-O-phospho-beta-D-ribosyl)acetamidine + L-glutamate + ADP + phosphate + H(+). It participates in purine metabolism; IMP biosynthesis via de novo pathway; 5-amino-1-(5-phospho-D-ribosyl)imidazole from N(2)-formyl-N(1)-(5-phospho-D-ribosyl)glycinamide: step 1/2. Functionally, part of the phosphoribosylformylglycinamidine synthase complex involved in the purines biosynthetic pathway. Catalyzes the ATP-dependent conversion of formylglycinamide ribonucleotide (FGAR) and glutamine to yield formylglycinamidine ribonucleotide (FGAM) and glutamate. The FGAM synthase complex is composed of three subunits. PurQ produces an ammonia molecule by converting glutamine to glutamate. PurL transfers the ammonia molecule to FGAR to form FGAM in an ATP-dependent manner. PurS interacts with PurQ and PurL and is thought to assist in the transfer of the ammonia molecule from PurQ to PurL. In Rhizobium leguminosarum bv. trifolii (strain WSM2304), this protein is Phosphoribosylformylglycinamidine synthase subunit PurL.